The chain runs to 426 residues: Serine--tRNA ligase (426 aa).

An L-serine-binding site is contributed by 231–233 (TAE). Residues 262 to 264 (RRE) and V278 each bind ATP. An L-serine-binding site is contributed by E285. ATP is bound at residue 349 to 352 (EVSS). S384 provides a ligand contact to L-serine.

This sequence belongs to the class-II aminoacyl-tRNA synthetase family. Type-1 seryl-tRNA synthetase subfamily. Homodimer. The tRNA molecule binds across the dimer.

The protein resides in the cytoplasm. It catalyses the reaction tRNA(Ser) + L-serine + ATP = L-seryl-tRNA(Ser) + AMP + diphosphate + H(+). The catalysed reaction is tRNA(Sec) + L-serine + ATP = L-seryl-tRNA(Sec) + AMP + diphosphate + H(+). It participates in aminoacyl-tRNA biosynthesis; selenocysteinyl-tRNA(Sec) biosynthesis; L-seryl-tRNA(Sec) from L-serine and tRNA(Sec): step 1/1. Catalyzes the attachment of serine to tRNA(Ser). Is also able to aminoacylate tRNA(Sec) with serine, to form the misacylated tRNA L-seryl-tRNA(Sec), which will be further converted into selenocysteinyl-tRNA(Sec). This is Serine--tRNA ligase from Chlamydia felis (strain Fe/C-56) (Chlamydophila felis).